Consider the following 172-residue polypeptide: Putative phosphoesterase BcerKBAB4_1135 (172 aa).

The active-site Proton donor is His34. Short sequence motifs (HXTX) lie at residues 34–37 and 115–118; these read HITL and HLTI. His115 acts as the Proton acceptor in catalysis.

This sequence belongs to the 2H phosphoesterase superfamily. YjcG family.

In Bacillus mycoides (strain KBAB4) (Bacillus weihenstephanensis), this protein is Putative phosphoesterase BcerKBAB4_1135.